Reading from the N-terminus, the 394-residue chain is 3-hydroxybenzoate 6-hydroxylase 1 (394 aa).

This sequence belongs to the 3-hydroxybenzoate 6-hydroxylase family. Homotrimer. Requires FAD as cofactor.

It catalyses the reaction 3-hydroxybenzoate + NADH + O2 + H(+) = 2,5-dihydroxybenzoate + NAD(+) + H2O. Inhibited by manganese, copper, mercury, and iron ions. Its function is as follows. Catalyzes the NAD- or NADP-dependent conversion of 3-hydroxybenzoate to gentisate. The affinity of the enzyme toward NAD is twice as high as for NADP. The enzyme shows higher specific activities against the intermediates in the degradation of 2,5-xylenol and 3,5-xylenol, 3-hydroxy-4-methylbenzoate and 3-hydroxy-5-methylbenzoate, respectively, than for 3-hydroxybenzoate. It also shows activity against 3-substituted benzoates. The protein is 3-hydroxybenzoate 6-hydroxylase 1 (xlnD) of Aquipseudomonas alcaligenes (Pseudomonas alcaligenes).